Reading from the N-terminus, the 152-residue chain is Methylglyoxal synthase (152 aa).

Residues Arg-6 to Lys-152 enclose the MGS-like domain. Residues His-19, Lys-23, Thr-45 to Thr-48, and Ser-65 to Gly-66 each bind substrate. Asp-71 serves as the catalytic Proton donor/acceptor. Residue His-98 coordinates substrate.

It belongs to the methylglyoxal synthase family.

The enzyme catalyses dihydroxyacetone phosphate = methylglyoxal + phosphate. Catalyzes the formation of methylglyoxal from dihydroxyacetone phosphate. In Proteus mirabilis (strain HI4320), this protein is Methylglyoxal synthase.